Consider the following 332-residue polypeptide: RNA polymerase II holoenzyme cyclin-like subunit (332 aa).

Positions 74–175 (RIYCYFLIMK…LIEELQSYMI (102 aa)) constitute a Cyclin N-terminal domain.

The protein belongs to the cyclin family. Cyclin C subfamily. In terms of assembly, component of the SRB8-11 complex, a regulatory module of the Mediator complex.

The protein localises to the nucleus. Its function is as follows. Component of the SRB8-11 complex. The SRB8-11 complex is a regulatory module of the Mediator complex which is itself involved in regulation of basal and activated RNA polymerase II-dependent transcription. The SRB8-11 complex may be involved in the transcriptional repression of a subset of genes regulated by Mediator. It may inhibit the association of the Mediator complex with RNA polymerase II to form the holoenzyme complex. The SRB8-11 complex phosphorylates the C-terminal domain (CTD) of the largest subunit of RNA polymerase II. The protein is RNA polymerase II holoenzyme cyclin-like subunit (SSN8) of Eremothecium gossypii (strain ATCC 10895 / CBS 109.51 / FGSC 9923 / NRRL Y-1056) (Yeast).